A 423-amino-acid chain; its full sequence is Proline racemase A (423 aa).

A signal peptide spans 1-31 (MRKSVCPKQKFFFSAFPFFFFFCVFPLISRT). The active-site Proton acceptor is the cysteine 160. Substrate is bound at residue 161–162 (GH). N-linked (GlcNAc...) asparagine glycosylation is found at asparagine 213, asparagine 266, and asparagine 282. Aspartate 326 contacts substrate. Catalysis depends on cysteine 330, which acts as the Proton donor. 331 to 332 (GT) contacts substrate.

The protein belongs to the proline racemase family. As to quaternary structure, homodimer.

The protein localises to the secreted. Its subcellular location is the membrane. The protein resides in the cytoplasm. The catalysed reaction is L-proline = D-proline. Its activity is regulated as follows. Inhibited by maleic acid, iodoacetamide, iodoacetate and, most particularly, pyrrole-2-carboxylic acid. Functionally, catalyzes the interconversion of L- and D-proline. Secreted isoform 1 contributes to parasite immune evasion by acting as a B-cell mitogen. Probably involved in parasite differentiation and infectivity. This is Proline racemase A (PA45-A) from Trypanosoma cruzi (strain CL Brener).